The primary structure comprises 243 residues: Ubiquinone biosynthesis O-methyltransferase (243 aa).

S-adenosyl-L-methionine-binding residues include Arg-45, Gly-65, Asp-86, and Leu-130.

Belongs to the methyltransferase superfamily. UbiG/COQ3 family.

It carries out the reaction a 3-demethylubiquinol + S-adenosyl-L-methionine = a ubiquinol + S-adenosyl-L-homocysteine + H(+). It catalyses the reaction a 3-(all-trans-polyprenyl)benzene-1,2-diol + S-adenosyl-L-methionine = a 2-methoxy-6-(all-trans-polyprenyl)phenol + S-adenosyl-L-homocysteine + H(+). It functions in the pathway cofactor biosynthesis; ubiquinone biosynthesis. Functionally, O-methyltransferase that catalyzes the 2 O-methylation steps in the ubiquinone biosynthetic pathway. This Idiomarina loihiensis (strain ATCC BAA-735 / DSM 15497 / L2-TR) protein is Ubiquinone biosynthesis O-methyltransferase.